Reading from the N-terminus, the 439-residue chain is Maintenance of mitochondrial morphology protein 1 (439 aa).

Residues 1–76 (MSQDLIETTA…NGNTWSFTQG (76 aa)) are Lumenal-facing. Residues 77–97 (LVIGQVSVIFIIIVFVKFFVF) traverse the membrane as a helical segment. Over 98–439 (ADSSSHIPTK…TPGEYVNSNI (342 aa)) the chain is Cytoplasmic. 3 disordered regions span residues 125–145 (KHSNGQFANDGENEDDTSLDS), 309–336 (MNGYSKENANGDGASSSNNDEDEDDGGT), and 405–425 (REPVTKKTTTTPSTTVNGTSA). An SMP-LTD domain is found at 165–395 (ASESLDWFNV…EPRFQVVRLP (231 aa)). 2 stretches are compositionally biased toward low complexity: residues 315–326 (ENANGDGASSSN) and 410–424 (KKTTTTPSTTVNGTS).

This sequence belongs to the MMM1 family. In terms of assembly, homodimer. Component of the ER-mitochondria encounter structure (ERMES) or MDM complex, composed of MMM1, MDM10, MDM12 and MDM34. An MMM1 homodimer associates with one molecule of MDM12 on each side in a pairwise head-to-tail manner, and the SMP-LTD domains of MMM1 and MDM12 generate a continuous hydrophobic tunnel for phospholipid trafficking.

The protein localises to the endoplasmic reticulum membrane. Component of the ERMES/MDM complex, which serves as a molecular tether to connect the endoplasmic reticulum (ER) and mitochondria. Components of this complex are involved in the control of mitochondrial shape and protein biogenesis, and function in nonvesicular lipid trafficking between the ER and mitochondria. The MDM12-MMM1 subcomplex functions in the major beta-barrel assembly pathway that is responsible for biogenesis of all outer membrane beta-barrel proteins, and acts in a late step after the SAM complex. The MDM10-MDM12-MMM1 subcomplex further acts in the TOM40-specific pathway after the action of the MDM12-MMM1 complex. Essential for establishing and maintaining the structure of mitochondria and maintenance of mtDNA nucleoids. The protein is Maintenance of mitochondrial morphology protein 1 of Candida albicans (strain WO-1) (Yeast).